The chain runs to 256 residues: ATP-dependent dethiobiotin synthetase BioD (256 aa).

Residue 13–18 coordinates ATP; that stretch reads EVGKTY. Threonine 17 is a binding site for Mg(2+). Lysine 38 is a catalytic residue. Serine 42 contributes to the substrate binding site. ATP-binding positions include aspartate 56, 118–121, and 187–188; these read EGAG and NR. Positions 56 and 118 each coordinate Mg(2+).

It belongs to the dethiobiotin synthetase family. As to quaternary structure, homodimer. It depends on Mg(2+) as a cofactor.

It localises to the cytoplasm. The enzyme catalyses (7R,8S)-7,8-diammoniononanoate + CO2 + ATP = (4R,5S)-dethiobiotin + ADP + phosphate + 3 H(+). It functions in the pathway cofactor biosynthesis; biotin biosynthesis; biotin from 7,8-diaminononanoate: step 1/2. Its function is as follows. Catalyzes a mechanistically unusual reaction, the ATP-dependent insertion of CO2 between the N7 and N8 nitrogen atoms of 7,8-diaminopelargonic acid (DAPA, also called 7,8-diammoniononanoate) to form a ureido ring. The polypeptide is ATP-dependent dethiobiotin synthetase BioD (Rhodopirellula baltica (strain DSM 10527 / NCIMB 13988 / SH1)).